The sequence spans 134 residues: Phosphoribosyl-AMP cyclohydrolase (134 aa).

Residue D80 participates in Mg(2+) binding. Residue C81 coordinates Zn(2+). Residues D82 and D84 each contribute to the Mg(2+) site. Zn(2+)-binding residues include C98 and C105.

Belongs to the PRA-CH family. In terms of assembly, homodimer. Mg(2+) serves as cofactor. Zn(2+) is required as a cofactor.

The protein localises to the cytoplasm. The catalysed reaction is 1-(5-phospho-beta-D-ribosyl)-5'-AMP + H2O = 1-(5-phospho-beta-D-ribosyl)-5-[(5-phospho-beta-D-ribosylamino)methylideneamino]imidazole-4-carboxamide. The protein operates within amino-acid biosynthesis; L-histidine biosynthesis; L-histidine from 5-phospho-alpha-D-ribose 1-diphosphate: step 3/9. In terms of biological role, catalyzes the hydrolysis of the adenine ring of phosphoribosyl-AMP. This is Phosphoribosyl-AMP cyclohydrolase from Bordetella pertussis (strain Tohama I / ATCC BAA-589 / NCTC 13251).